The sequence spans 538 residues: Bifunctional purine biosynthesis protein PurH (538 aa).

The 151-residue stretch at 8–158 (IPAPDLVPVR…KNHAYVAIVT (151 aa)) folds into the MGS-like domain.

Belongs to the PurH family.

The enzyme catalyses (6R)-10-formyltetrahydrofolate + 5-amino-1-(5-phospho-beta-D-ribosyl)imidazole-4-carboxamide = 5-formamido-1-(5-phospho-D-ribosyl)imidazole-4-carboxamide + (6S)-5,6,7,8-tetrahydrofolate. The catalysed reaction is IMP + H2O = 5-formamido-1-(5-phospho-D-ribosyl)imidazole-4-carboxamide. It functions in the pathway purine metabolism; IMP biosynthesis via de novo pathway; 5-formamido-1-(5-phospho-D-ribosyl)imidazole-4-carboxamide from 5-amino-1-(5-phospho-D-ribosyl)imidazole-4-carboxamide (10-formyl THF route): step 1/1. Its pathway is purine metabolism; IMP biosynthesis via de novo pathway; IMP from 5-formamido-1-(5-phospho-D-ribosyl)imidazole-4-carboxamide: step 1/1. The sequence is that of Bifunctional purine biosynthesis protein PurH from Mesorhizobium japonicum (strain LMG 29417 / CECT 9101 / MAFF 303099) (Mesorhizobium loti (strain MAFF 303099)).